We begin with the raw amino-acid sequence, 209 residues long: Small ribosomal subunit protein uS4 (209 aa).

One can recognise an S4 RNA-binding domain in the interval G99–K179.

This sequence belongs to the universal ribosomal protein uS4 family. In terms of assembly, part of the 30S ribosomal subunit. Contacts protein S5. The interaction surface between S4 and S5 is involved in control of translational fidelity.

One of the primary rRNA binding proteins, it binds directly to 16S rRNA where it nucleates assembly of the body of the 30S subunit. Functionally, with S5 and S12 plays an important role in translational accuracy. This chain is Small ribosomal subunit protein uS4, found in Azoarcus sp. (strain BH72).